The following is a 469-amino-acid chain: MLCLCLYVPIAGAAQTEFQYFESKGLPAELKSIFKLSVFIPSQEFSTYRQWKQKIVQAGDKDLDGQLDFEEFVHYLQDHEKKLRLVFKSLDKKNDGRIDAQEIMQSLRDLGVKISEQQAEKILKSMDKNGTMTIDWNEWRDYHLLHPVENIPEIILYWKHSTIFDVGENLTVPDEFTVEERQTGMWWRHLVAGGGAGAVSRTCTAPLDRLKVLMQVHASRSNNMCIVGGFTQMIREGGAKSLWRGNGINVLKIAPESAIKFMAYEQMKRLVGSDQETLRIHERLVAGSLAGAIAQSSIYPMEVLKTRMALRKTGQYSGMLDCARRILAKEGVAAFYKGYIPNMLGIIPYAGIDLAVYETLKNTWLQRYAVNSADPGVFVLLACGTISSTCGQLASYPLALVRTRMQAQASIEGAPEVTMSSLFKQILRTEGAFGLYRGLAPNFMKVIPAVSISYVVYENLKITLGVQSR.

Residues 1–165 (MLCLCLYVPI…LYWKHSTIFD (165 aa)) form a regulatory N-terminal domain region. Over 1-189 (MLCLCLYVPI…ERQTGMWWRH (189 aa)) the chain is Mitochondrial intermembrane. 3 consecutive EF-hand domains span residues 47 to 80 (TYRQWKQKIVQAGDKDLDGQLDFEEFVHYLQDHE), 78 to 113 (DHEKKLRLVFKSLDKKNDGRIDAQEIMQSLRDLGVK), and 114 to 149 (ISEQQAEKILKSMDKNGTMTIDWNEWRDYHLLHPVE). Positions 60, 62, 64, 66, and 71 each coordinate Ca(2+). The linker region stretch occupies residues 151-160 (IPEIILYWKH). The segment at 166-469 (VGENLTVPDE…LKITLGVQSR (304 aa)) is C-terminal transmembrane transporter domain. Solcar repeat units follow at residues 184-270 (GMWW…MKRL), 278-363 (LRIH…LKNT), and 375-463 (PGVF…LKIT). Residues 190 to 207 (LVAGGGAGAVSRTCTAPL) traverse the membrane as a helical segment. At 208 to 244 (DRLKVLMQVHASRSNNMCIVGGFTQMIREGGAKSLWR) the chain is on the mitochondrial matrix side. The helical transmembrane segment at 245-264 (GNGINVLKIAPESAIKFMAY) threads the bilayer. Topologically, residues 265-287 (EQMKRLVGSDQETLRIHERLVAG) are mitochondrial intermembrane. Residues 288–301 (SLAGAIAQSSIYPM) form a helical membrane-spanning segment. The Mitochondrial matrix segment spans residues 302–337 (EVLKTRMALRKTGQYSGMLDCARRILAKEGVAAFYK). Residues 338-357 (GYIPNMLGIIPYAGIDLAVY) form a helical membrane-spanning segment. Residues 358–380 (ETLKNTWLQRYAVNSADPGVFVL) lie on the Mitochondrial intermembrane side of the membrane. A helical membrane pass occupies residues 381 to 398 (LACGTISSTCGQLASYPL). At 399–437 (ALVRTRMQAQASIEGAPEVTMSSLFKQILRTEGAFGLYR) the chain is on the mitochondrial matrix side. A helical transmembrane segment spans residues 438-457 (GLAPNFMKVIPAVSISYVVY). Over 458 to 469 (ENLKITLGVQSR) the chain is Mitochondrial intermembrane.

Belongs to the mitochondrial carrier (TC 2.A.29) family.

The protein resides in the mitochondrion inner membrane. The catalysed reaction is Mg(2+)(out) + phosphate(in) + ATP(out) = Mg(2+)(in) + phosphate(out) + ATP(in). Activated by an increase in cytosolic calcium levels that induce a conformational change of the N-terminal regulatory domain, uncapping the channel and allowing transport. Electroneutral antiporter that most probably mediates the transport of adenyl nucleotides through the inner mitochondrial membrane. Originally identified as an ATP-magnesium/inorganic phosphate antiporter, it could have a broader specificity for adenyl nucleotides. By regulating the mitochondrial matrix adenyl nucleotide pool could adapt to changing cellular energetic demands and indirectly regulate adenyl nucleotide-dependent metabolic pathways. The chain is Mitochondrial adenyl nucleotide antiporter SLC25A25 from Mus musculus (Mouse).